The primary structure comprises 2009 residues: ADP-ribosylation factor guanine nucleotide-exchange factor SEC7 (2009 aa).

Positions 1 to 220 are disordered; the sequence is MSEQNSVVNA…ISLSSNGSNT (220 aa). The span at 17 to 33 shows a compositional bias: polar residues; sequence ISSNVETASSVNPSVKP. Over residues 37–53 the composition is skewed to basic and acidic residues; the sequence is IKEEAKETNGEDQKCKG. Over residues 91 to 118 the composition is skewed to acidic residues; the sequence is EGEDGDEDEDEDEDEDEDNGDEDDEDVD. A compositionally biased stretch (low complexity) spans 134–143; sequence SVSGESTESS. The segment covering 144–154 has biased composition (acidic residues); sequence SGEDEESDESD. Over residues 155–165 the composition is skewed to low complexity; that stretch reads GNTSNSSSGDE. Over residues 166 to 184 the composition is skewed to acidic residues; that stretch reads SGSEEEEEEEEEEEEEENA. Over residues 194 to 209 the composition is skewed to polar residues; that stretch reads SVPTNDSTAPRSTHTR. A compositionally biased stretch (low complexity) spans 210–220; the sequence is NISLSSNGSNT. Residues Ser-212 and Ser-215 each carry the phosphoserine modification. Residue Thr-334 is modified to Phosphothreonine. A phosphoserine mark is found at Ser-447, Ser-452, and Ser-455. Residues 653 to 657 carry the HUS box motif; it reads NYDCN. The segment covering 771 to 788 has biased composition (low complexity); it reads SSARQESRSSLSNDVRSS. Positions 771 to 814 are disordered; it reads SSARQESRSSLSNDVRSSIMTSNDDFKPTYEDEESRSLSSQNID. A Glycyl lysine isopeptide (Lys-Gly) (interchain with G-Cter in ubiquitin) cross-link involves residue Lys-797. Position 807 is a phosphoserine (Ser-807). In terms of domain architecture, SEC7 spans 824–1010; it reads LKLRKTALSE…LFNEIANNEI (187 aa). Mg(2+) is bound at residue Asp-940. The segment at 1017 to 1220 is HDS1 domain; sequence HQAMLSGDTN…QARVANPRVS (204 aa). Position 1226 is a phosphoserine (Ser-1226). The residue at position 1240 (Thr-1240) is a Phosphothreonine. Over residues 1708–1723 the composition is skewed to polar residues; it reads GRKSSVSHHQTTNDTS. The disordered stretch occupies residues 1708 to 1803; that stretch reads GRKSSVSHHQ…KKTKHMKRNE (96 aa). Positions 1724–1751 are enriched in basic and acidic residues; it reads QHSDDDSNDRRENDSNISETVERAHQEE. Ser-1741 and Ser-1752 each carry phosphoserine. Residues 1764–1777 show a composition bias toward polar residues; the sequence is LNGQTKLNNGNSVP. A C2 domain-interacting region (CIR) region spans residues 1836 to 1883; the sequence is FENEDFAHCIPYKEAIRITRLLEKSYEFSRDFNEDYGLRTRLVEARVV.

In terms of assembly, interacts with ARF1. Interacts (via C-terminus) with RSP5 ubiquitin ligase.

It is found in the cytoplasm. The protein resides in the golgi apparatus. The protein localises to the trans-Golgi network. Its subcellular location is the cytoplasmic vesicle. It localises to the COPI-coated vesicle membrane. It is found in the COPII-coated vesicle membrane. Functionally, guanine exchange factor that acts as an activator of ARF1 at the trans-Golgi network and is thus involved in vesicular budding and traffic between compartments of the Golgi apparatus. Activation of Arf (ADP-ribosylation factor) GTPases is essential for vesicle formation via recruitment of cargo adapters and coat proteins necessary for Golgi trafficking. Also plays an essential role in ER-to-Golgi traffic. SEC7 also acts as an effector of two Rab GTPases, YPT1 and YPT31/32. The protein is ADP-ribosylation factor guanine nucleotide-exchange factor SEC7 of Saccharomyces cerevisiae (strain ATCC 204508 / S288c) (Baker's yeast).